The sequence spans 122 residues: UPF0102 protein CPE1705 (122 aa).

Belongs to the UPF0102 family.

The protein is UPF0102 protein CPE1705 of Clostridium perfringens (strain 13 / Type A).